Here is a 2326-residue protein sequence, read N- to C-terminus: Telomere-associated protein RIF1 (2326 aa).

Disordered stretches follow at residues 381-410 (QGTP…SPAT), 1105-1965 (YTQS…CITP), and 1993-2050 (VENK…DDSL). The span at 382 to 396 (GTPSRVPSNPNSANP) shows a compositional bias: polar residues. 2 stretches are compositionally biased toward basic and acidic residues: residues 1112 to 1126 (SLEK…EDFK) and 1150 to 1182 (CKVD…RGDR). Low complexity predominate over residues 1216-1225 (SAISCSSTSS). 2 stretches are compositionally biased toward polar residues: residues 1233-1242 (QPASRRQSFI) and 1252-1270 (SRPF…SQSA). Residues 1290 to 1299 (KSGEESRKSS) are compositionally biased toward basic and acidic residues. Polar residues-rich tracts occupy residues 1318 to 1332 (MEQQ…VTNS) and 1341 to 1353 (SFVS…SPES). Residues 1376–1402 (PDIKKAEAVMAEIEKVRAFEMDSKENT) are compositionally biased toward basic and acidic residues. Residues 1403-1412 (PPKTAVSSEQ) are compositionally biased toward polar residues. Basic and acidic residues-rich tracts occupy residues 1448–1480 (QDKE…DASQ), 1489–1511 (ASEH…DLGS), and 1519–1539 (GADE…KSDS). Positions 1564–1573 (SSQGLLSSIE) are enriched in polar residues. Positions 1586–1595 (SLKKKSGKTK) are enriched in basic residues. Positions 1596-1609 (NKSDSLEGKRKDVQ) are enriched in basic and acidic residues. Composition is skewed to polar residues over residues 1610 to 1640 (PESQ…SEVS) and 1671 to 1683 (RTSP…SVEQ). Basic and acidic residues predominate over residues 1697–1712 (RVSDEVLKGDENKCIE). The segment covering 1713–1745 (KQSSVEQHSSVQPENVQGANTSGSDLSSLQMQD) has biased composition (polar residues). Basic and acidic residues predominate over residues 1776–1785 (SKSEDPRELI). Polar residues predominate over residues 1795-1813 (AVSTAEVSGSSNLEESLSI). Composition is skewed to basic and acidic residues over residues 1869–1884 (VEIK…DRAE), 1908–1925 (SEEK…HGEM), and 1932–1954 (DGSK…KEEA). Residues 2009–2036 (SFTSVNGSPSGVQARCTWSPSASPSTSI) are compositionally biased toward polar residues.

Belongs to the RIF1 family. Interacts with TP53BP1 (when phosphorylated by ATM).

It localises to the nucleus. Its subcellular location is the chromosome. The protein resides in the telomere. It is found in the cytoplasm. The protein localises to the cytoskeleton. It localises to the spindle. In terms of biological role, key regulator of TP53BP1 that plays a key role in the repair of double-strand DNA breaks (DSBs) in response to DNA damage: acts by promoting non-homologous end joining (NHEJ)-mediated repair of DSBs. In response to DNA damage, interacts with ATM-phosphorylated TP53BP1, allowing recruitment to DNA DSBs. Once recruited to DSBs, RIF1 and TP53BP1 act by promoting NHEJ-mediated repair of DSBs. In the same time, RIF1 and TP53BP1 specifically counteract DSBs resection via homologous recombination (HR) during G1 phase. This chain is Telomere-associated protein RIF1, found in Gallus gallus (Chicken).